The chain runs to 296 residues: ATP synthase gamma chain (296 aa).

Belongs to the ATPase gamma chain family. As to quaternary structure, F-type ATPases have 2 components, CF(1) - the catalytic core - and CF(0) - the membrane proton channel. CF(1) has five subunits: alpha(3), beta(3), gamma(1), delta(1), epsilon(1). CF(0) has three main subunits: a, b and c.

The protein resides in the cell inner membrane. In terms of biological role, produces ATP from ADP in the presence of a proton gradient across the membrane. The gamma chain is believed to be important in regulating ATPase activity and the flow of protons through the CF(0) complex. This is ATP synthase gamma chain from Methylorubrum extorquens (strain PA1) (Methylobacterium extorquens).